Reading from the N-terminus, the 336-residue chain is Holliday junction branch migration complex subunit RuvB (336 aa).

A large ATPase domain (RuvB-L) region spans residues 4 to 184; it reads ADRLISAGTT…FGIVQRLEFY (181 aa). ATP contacts are provided by residues Ile-23, Arg-24, Gly-65, Lys-68, Thr-69, Thr-70, 131 to 133, Arg-174, Tyr-184, and Arg-221; that span reads EDY. Residue Thr-69 coordinates Mg(2+). Positions 185-255 are small ATPAse domain (RuvB-S); sequence QVPDLQYIVS…IAAQALDMLN (71 aa). The interval 258-336 is head domain (RuvB-H); that stretch reads AEGFDYMDRK…HFGITPPEMP (79 aa). Positions 294, 313, and 318 each coordinate DNA.

It belongs to the RuvB family. In terms of assembly, homohexamer. Forms an RuvA(8)-RuvB(12)-Holliday junction (HJ) complex. HJ DNA is sandwiched between 2 RuvA tetramers; dsDNA enters through RuvA and exits via RuvB. An RuvB hexamer assembles on each DNA strand where it exits the tetramer. Each RuvB hexamer is contacted by two RuvA subunits (via domain III) on 2 adjacent RuvB subunits; this complex drives branch migration. In the full resolvosome a probable DNA-RuvA(4)-RuvB(12)-RuvC(2) complex forms which resolves the HJ.

It localises to the cytoplasm. The catalysed reaction is ATP + H2O = ADP + phosphate + H(+). Functionally, the RuvA-RuvB-RuvC complex processes Holliday junction (HJ) DNA during genetic recombination and DNA repair, while the RuvA-RuvB complex plays an important role in the rescue of blocked DNA replication forks via replication fork reversal (RFR). RuvA specifically binds to HJ cruciform DNA, conferring on it an open structure. The RuvB hexamer acts as an ATP-dependent pump, pulling dsDNA into and through the RuvAB complex. RuvB forms 2 homohexamers on either side of HJ DNA bound by 1 or 2 RuvA tetramers; 4 subunits per hexamer contact DNA at a time. Coordinated motions by a converter formed by DNA-disengaged RuvB subunits stimulates ATP hydrolysis and nucleotide exchange. Immobilization of the converter enables RuvB to convert the ATP-contained energy into a lever motion, pulling 2 nucleotides of DNA out of the RuvA tetramer per ATP hydrolyzed, thus driving DNA branch migration. The RuvB motors rotate together with the DNA substrate, which together with the progressing nucleotide cycle form the mechanistic basis for DNA recombination by continuous HJ branch migration. Branch migration allows RuvC to scan DNA until it finds its consensus sequence, where it cleaves and resolves cruciform DNA. In Escherichia coli (strain ATCC 8739 / DSM 1576 / NBRC 3972 / NCIMB 8545 / WDCM 00012 / Crooks), this protein is Holliday junction branch migration complex subunit RuvB.